A 1330-amino-acid polypeptide reads, in one-letter code: DNA-directed RNA polymerase subunit beta'' (1330 aa).

Zn(2+) is bound by residues cysteine 214, cysteine 282, cysteine 289, and cysteine 292.

It belongs to the RNA polymerase beta' chain family. RpoC2 subfamily. In plastids the minimal PEP RNA polymerase catalytic core is composed of four subunits: alpha, beta, beta', and beta''. When a (nuclear-encoded) sigma factor is associated with the core the holoenzyme is formed, which can initiate transcription. Zn(2+) serves as cofactor.

The protein resides in the plastid. It is found in the chloroplast. It catalyses the reaction RNA(n) + a ribonucleoside 5'-triphosphate = RNA(n+1) + diphosphate. DNA-dependent RNA polymerase catalyzes the transcription of DNA into RNA using the four ribonucleoside triphosphates as substrates. This chain is DNA-directed RNA polymerase subunit beta'', found in Physcomitrium patens (Spreading-leaved earth moss).